The primary structure comprises 430 residues: Aspartate aminotransferase, mitochondrial (430 aa).

The N-terminal 29 residues, 1-29 (MALLHSGRVLPGIAAAFHPGLAAAASARA), are a transit peptide targeting the mitochondrion. The residue at position 48 (Thr48) is a Phosphothreonine. An N6-acetyllysine modification is found at Lys59. Gly65 is a substrate binding site. Lys73 is modified (N6-acetyllysine; alternate). At Lys73 the chain carries N6-succinyllysine; alternate. Lys82 carries the post-translational modification N6-acetyllysine. Lys90 carries the N6-acetyllysine; alternate modification. An N6-succinyllysine; alternate modification is found at Lys90. A 3'-nitrotyrosine; alternate modification is found at Tyr96. At Tyr96 the chain carries Phosphotyrosine; alternate. N6-acetyllysine; alternate occurs at positions 107 and 122. 2 positions are modified to N6-succinyllysine; alternate: Lys107 and Lys122. A Phosphoserine modification is found at Ser143. Lys159 bears the N6-acetyllysine; alternate mark. At Lys159 the chain carries N6-succinyllysine; alternate. Trp162 contributes to the substrate binding site. N6-acetyllysine; alternate is present on Lys185. The residue at position 185 (Lys185) is an N6-succinyllysine; alternate. Residue Asn215 coordinates substrate. Position 227 is an N6-succinyllysine (Lys227). The residue at position 234 (Lys234) is an N6-acetyllysine. Residues Lys279 and Lys296 each carry the N6-acetyllysine; alternate modification. Lys279 bears the N6-(pyridoxal phosphate)lysine; alternate mark. Lys296 is modified (N6-succinyllysine; alternate). Lys302 carries the N6-acetyllysine modification. Lys309 bears the N6-acetyllysine; alternate mark. Lys309 carries the post-translational modification N6-succinyllysine; alternate. Arg313 carries the asymmetric dimethylarginine modification. A Phosphothreonine modification is found at Thr333. Lys338 is modified (N6-acetyllysine; alternate). Lys338 bears the N6-succinyllysine; alternate mark. The residue at position 345 (Lys345) is an N6-acetyllysine. Residue Lys363 is modified to N6-acetyllysine; alternate. N6-succinyllysine; alternate is present on Lys363. Residues Lys364 and Lys387 each carry the N6-acetyllysine modification. An N6-acetyllysine; alternate mark is found at Lys396 and Lys404. Lys396 and Lys404 each carry N6-succinyllysine; alternate. Arg407 serves as a coordination point for substrate.

It belongs to the class-I pyridoxal-phosphate-dependent aminotransferase family. Homodimer. Pyridoxal 5'-phosphate is required as a cofactor.

It localises to the mitochondrion matrix. Its subcellular location is the cell membrane. It catalyses the reaction L-aspartate + 2-oxoglutarate = oxaloacetate + L-glutamate. The catalysed reaction is L-kynurenine + 2-oxoglutarate = kynurenate + L-glutamate + H2O. Functionally, catalyzes the irreversible transamination of the L-tryptophan metabolite L-kynurenine to form kynurenic acid (KA). As a member of the malate-aspartate shuttle, it has a key role in the intracellular NAD(H) redox balance. Is important for metabolite exchange between mitochondria and cytosol, and for amino acid metabolism. Facilitates cellular uptake of long-chain free fatty acids. This is Aspartate aminotransferase, mitochondrial from Homo sapiens (Human).